We begin with the raw amino-acid sequence, 162 residues long: Putative 4-hydroxy-4-methyl-2-oxoglutarate aldolase (162 aa).

Substrate-binding positions include 75–78 (GDML) and Arg-97. Position 98 (Asp-98) interacts with a divalent metal cation.

The protein belongs to the class II aldolase/RraA-like family. In terms of assembly, homotrimer. Requires a divalent metal cation as cofactor.

The enzyme catalyses 4-hydroxy-4-methyl-2-oxoglutarate = 2 pyruvate. The catalysed reaction is oxaloacetate + H(+) = pyruvate + CO2. Catalyzes the aldol cleavage of 4-hydroxy-4-methyl-2-oxoglutarate (HMG) into 2 molecules of pyruvate. Also contains a secondary oxaloacetate (OAA) decarboxylase activity due to the common pyruvate enolate transition state formed following C-C bond cleavage in the retro-aldol and decarboxylation reactions. In Ectopseudomonas mendocina (strain ymp) (Pseudomonas mendocina), this protein is Putative 4-hydroxy-4-methyl-2-oxoglutarate aldolase.